The chain runs to 426 residues: Melibiose/raffinose/stachyose-binding protein MelE (426 aa).

The first 18 residues, 1–18 (MKHTFVLFLSLILLVLPG), serve as a signal peptide directing secretion. The N-palmitoyl cysteine moiety is linked to residue Cys19. Cys19 carries S-diacylglycerol cysteine lipidation.

The protein belongs to the bacterial solute-binding protein 1 family. The complex is composed of two ATP-binding proteins (MsmX), two transmembrane proteins (MelC and MelD) and a solute-binding protein (MelE).

It is found in the cell membrane. Functionally, part of the ABC transporter complex MelEDC-MsmX involved in melibiose, raffinose and stachyose import. Binds melibiose, raffinose and stachyose. This Bacillus subtilis (strain 168) protein is Melibiose/raffinose/stachyose-binding protein MelE.